We begin with the raw amino-acid sequence, 460 residues long: Phosphoenolpyruvate carboxylase (460 aa).

The protein belongs to the PEPCase type 2 family. As to quaternary structure, homotetramer. Mg(2+) is required as a cofactor.

The catalysed reaction is oxaloacetate + phosphate = phosphoenolpyruvate + hydrogencarbonate. Functionally, catalyzes the irreversible beta-carboxylation of phosphoenolpyruvate (PEP) to form oxaloacetate (OAA), a four-carbon dicarboxylic acid source for the tricarboxylic acid cycle. In Pyrobaculum arsenaticum (strain DSM 13514 / JCM 11321 / PZ6), this protein is Phosphoenolpyruvate carboxylase.